A 500-amino-acid chain; its full sequence is Probable cytosol aminopeptidase (500 aa).

Lysine 265 and aspartate 270 together coordinate Mn(2+). Lysine 277 is an active-site residue. Mn(2+)-binding residues include aspartate 288, aspartate 347, and glutamate 349. Arginine 351 is an active-site residue.

This sequence belongs to the peptidase M17 family. Requires Mn(2+) as cofactor.

The protein resides in the cytoplasm. It catalyses the reaction Release of an N-terminal amino acid, Xaa-|-Yaa-, in which Xaa is preferably Leu, but may be other amino acids including Pro although not Arg or Lys, and Yaa may be Pro. Amino acid amides and methyl esters are also readily hydrolyzed, but rates on arylamides are exceedingly low.. The catalysed reaction is Release of an N-terminal amino acid, preferentially leucine, but not glutamic or aspartic acids.. In terms of biological role, presumably involved in the processing and regular turnover of intracellular proteins. Catalyzes the removal of unsubstituted N-terminal amino acids from various peptides. The polypeptide is Probable cytosol aminopeptidase (Corynebacterium glutamicum (strain ATCC 13032 / DSM 20300 / JCM 1318 / BCRC 11384 / CCUG 27702 / LMG 3730 / NBRC 12168 / NCIMB 10025 / NRRL B-2784 / 534)).